Reading from the N-terminus, the 111-residue chain is Toxin 3FTx-Tel4 (111 aa).

The signal sequence occupies residues 1 to 19 (MKTLLLALVVVAFMCLGSA). Residues 20–34 (DQLGLGSQRIDWEQG) constitute a propeptide that is removed on maturation. Glutamine 35 is modified (pyrrolidone carboxylic acid). Cystine bridges form between cysteine 44/cysteine 68, cysteine 47/cysteine 55, cysteine 61/cysteine 87, cysteine 91/cysteine 102, and cysteine 103/cysteine 108.

It belongs to the three-finger toxin family. Ancestral subfamily. Boigatoxin sub-subfamily. In terms of tissue distribution, expressed by the venom gland.

It is found in the secreted. Potent postsynaptic neurotoxin. Displays readily reversible competitive antagonism at the nicotinic acetylcholine receptor (nAChR). In Telescopus dhara (Egyptian catsnake), this protein is Toxin 3FTx-Tel4.